The primary structure comprises 588 residues: Pectinesterase 4 (588 aa).

Residues 1–24 (MIGKVVVSVASILLIVGVAIGVVA) form the signal peptide. 3 N-linked (GlcNAc...) asparagine glycosylation sites follow: Asn86, Asn206, and Asn342. Thr353 and Gln383 together coordinate substrate. Asp406 functions as the Proton donor in the catalytic mechanism. Asp427 acts as the Nucleophile in catalysis. Substrate contacts are provided by Arg496 and Trp498.

It in the N-terminal section; belongs to the PMEI family. This sequence in the C-terminal section; belongs to the pectinesterase family. As to expression, expressed in pollen grains and pollen tubes.

It localises to the secreted. The protein resides in the cell wall. It catalyses the reaction [(1-&gt;4)-alpha-D-galacturonosyl methyl ester](n) + n H2O = [(1-&gt;4)-alpha-D-galacturonosyl](n) + n methanol + n H(+). The protein operates within glycan metabolism; pectin degradation; 2-dehydro-3-deoxy-D-gluconate from pectin: step 1/5. Acts in the modification of cell walls via demethylesterification of cell wall pectin. Plays an important role in growth of pollen tubes in female floral tissues, possibly via enhancing the interaction between the pollen tube and female floral tissues by modification of the cell walls. The sequence is that of Pectinesterase 4 (PME4) from Arabidopsis thaliana (Mouse-ear cress).